The sequence spans 859 residues: Replication origin-binding protein (859 aa).

The Helicase ATP-binding domain maps to 70–235; the sequence is PLAADARRVT…AALRGAGSVH (166 aa). 83 to 90 contacts ATP; it reads APMGSGKT.

This sequence belongs to the herpesviridae OriBP family. In terms of assembly, homodimer. Interacts with the major DNA-binding protein. Interacts with the helicase/primase component UL8 and the polymerase accessory protein.

The protein resides in the host nucleus. In terms of biological role, functions as a docking protein to recruit essential components of the viral replication machinery to viral DNA origins. In the presence of the major DNA-binding protein, opens dsDNA leading to a conformational change in the origin that facilitates DNA unwinding and subsequent replication. The chain is Replication origin-binding protein (UL9) from Bovine herpesvirus 1.1 (strain Cooper) (BoHV-1).